The primary structure comprises 491 residues: Protein nucleotidyltransferase YdiU (491 aa).

ATP is bound by residues glycine 88, glycine 90, arginine 91, lysine 111, aspartate 123, glycine 124, arginine 174, and arginine 181. Residue aspartate 250 is the Proton acceptor of the active site. Mg(2+)-binding residues include asparagine 251 and aspartate 260. Aspartate 260 contributes to the ATP binding site.

This sequence belongs to the SELO family. Requires Mg(2+) as cofactor. It depends on Mn(2+) as a cofactor.

It catalyses the reaction L-seryl-[protein] + ATP = 3-O-(5'-adenylyl)-L-seryl-[protein] + diphosphate. The catalysed reaction is L-threonyl-[protein] + ATP = 3-O-(5'-adenylyl)-L-threonyl-[protein] + diphosphate. The enzyme catalyses L-tyrosyl-[protein] + ATP = O-(5'-adenylyl)-L-tyrosyl-[protein] + diphosphate. It carries out the reaction L-histidyl-[protein] + UTP = N(tele)-(5'-uridylyl)-L-histidyl-[protein] + diphosphate. It catalyses the reaction L-seryl-[protein] + UTP = O-(5'-uridylyl)-L-seryl-[protein] + diphosphate. The catalysed reaction is L-tyrosyl-[protein] + UTP = O-(5'-uridylyl)-L-tyrosyl-[protein] + diphosphate. Nucleotidyltransferase involved in the post-translational modification of proteins. It can catalyze the addition of adenosine monophosphate (AMP) or uridine monophosphate (UMP) to a protein, resulting in modifications known as AMPylation and UMPylation. In Rhodopseudomonas palustris (strain BisB18), this protein is Protein nucleotidyltransferase YdiU.